The following is a 680-amino-acid chain: GTPase Obg (680 aa).

One can recognise an Obg domain in the interval 2 to 160; sequence DQFIDVVSFE…LNIRLEVKLI (159 aa). The OBG-type G domain maps to 161–336; sequence ADIGLVGMPN…LDGDMLDKVT (176 aa). GTP-binding positions include 167–174, 192–196, 214–217, 281–284, and 317–319; these read GMPNTGKS, FTTLT, DIPG, NKTD, and PEI. Serine 174 and threonine 194 together coordinate Mg(2+). The tract at residues 371–680 is radical SAM domain; the sequence is TKRVFGPVVS…NGVLSYAVNI (310 aa). The Radical SAM core domain occupies 383–613; that stretch reads LGNSLGIDVI…IEIDVPSVSD (231 aa). Positions 397, 401, and 404 each coordinate [4Fe-4S] cluster.

It belongs to the TRAFAC class OBG-HflX-like GTPase superfamily. OBG GTPase family. As to quaternary structure, monomer. The cofactor is Mg(2+). It depends on [4Fe-4S] cluster as a cofactor.

It is found in the cytoplasm. In terms of biological role, an essential GTPase which binds GTP, GDP and possibly (p)ppGpp with moderate affinity, with high nucleotide exchange rates and a fairly low GTP hydrolysis rate. Plays a role in control of the cell cycle, stress response, ribosome biogenesis and in those bacteria that undergo differentiation, in morphogenesis control. The sequence is that of GTPase Obg from Brachyspira hyodysenteriae (strain ATCC 49526 / WA1).